The following is a 245-amino-acid chain: tRNA pseudouridine synthase A (245 aa).

Asp-52 serves as the catalytic Nucleophile. Tyr-111 is a substrate binding site.

The protein belongs to the tRNA pseudouridine synthase TruA family. Homodimer.

The catalysed reaction is uridine(38/39/40) in tRNA = pseudouridine(38/39/40) in tRNA. In terms of biological role, formation of pseudouridine at positions 38, 39 and 40 in the anticodon stem and loop of transfer RNAs. The polypeptide is tRNA pseudouridine synthase A (Thermotoga maritima (strain ATCC 43589 / DSM 3109 / JCM 10099 / NBRC 100826 / MSB8)).